The sequence spans 316 residues: Oligopeptide transport system permease protein AppB (316 aa).

The next 6 helical transmembrane spans lie at 10–30, 100–120, 138–158, 177–197, 240–260, and 290–310; these read LMSI…MKAA, LLLM…FGVL, FIGL…VLSV, IFDR…ADMA, LPVI…SVVV, and VISA…YAIV. Residues 96–303 enclose the ABC transmembrane type-1 domain; that stretch reads LPNTLLLMLV…VLVVVGNLIA (208 aa).

It belongs to the binding-protein-dependent transport system permease family. OppBC subfamily.

It is found in the cell membrane. Functionally, this protein is a component of an oligopeptide permease, a binding protein-dependent transport system. This APP system can completely substitute for the OPP system in both sporulation and genetic competence, though, unlike OPP, is incapable of transporting tripeptides. Probably responsible for the translocation of the substrate across the membrane. The chain is Oligopeptide transport system permease protein AppB (appB) from Bacillus subtilis (strain 168).